A 130-amino-acid chain; its full sequence is Small ribosomal subunit protein uS9 (130 aa).

A disordered region spans residues 102–130 (GFLTRDPRMKERKKYGLKKARRAPQFSKR). Positions 111–130 (KERKKYGLKKARRAPQFSKR) are enriched in basic residues.

The protein belongs to the universal ribosomal protein uS9 family.

The protein is Small ribosomal subunit protein uS9 of Clostridium novyi (strain NT).